Consider the following 529-residue polypeptide: Putative UPF0481 protein At3g02645 (529 aa).

2 N-linked (GlcNAc...) asparagine glycosylation sites follow: N365 and N403. The chain crosses the membrane as a helical span at residues 498–518 (ILAFLAAVLLLMLVSLQLFSL).

The protein belongs to the UPF0481 family.

The protein resides in the membrane. The sequence is that of Putative UPF0481 protein At3g02645 from Arabidopsis thaliana (Mouse-ear cress).